Consider the following 238-residue polypeptide: Probable transcriptional regulatory protein MGAS2096_Spy0287 (238 aa).

This sequence belongs to the TACO1 family. YeeN subfamily.

It localises to the cytoplasm. In Streptococcus pyogenes serotype M12 (strain MGAS2096), this protein is Probable transcriptional regulatory protein MGAS2096_Spy0287.